Reading from the N-terminus, the 166-residue chain is PTS system glucose-specific EIIA component (166 aa).

The PTS EIIA type-1 domain occupies 34–138 (DPVFAQKMMG…SVISPIIITN (105 aa)). The Zn(2+) site is built by His71 and His86. Residue His86 is the Tele-phosphohistidine intermediate; for EIIA activity of the active site. The residue at position 86 (His86) is a Phosphohistidine; by HPr.

As to quaternary structure, heterodimer with glycerol kinase (glpk). Requires Zn(2+) as cofactor.

The protein resides in the cytoplasm. Functionally, the phosphoenolpyruvate-dependent sugar phosphotransferase system (sugar PTS), a major carbohydrate active transport system, catalyzes the phosphorylation of incoming sugar substrates concomitantly with their translocation across the cell membrane. The enzyme II complex composed of PtsG and Crr is involved in glucose transport. The protein is PTS system glucose-specific EIIA component (crr) of Staphylococcus aureus (strain COL).